The following is a 496-amino-acid chain: Alanine aminotransferase 1 (496 aa).

The residue at position 2 (A2) is an N-acetylalanine. Position 22 is a phosphothreonine (T22). K314 carries the post-translational modification N6-(pyridoxal phosphate)lysine.

Belongs to the class-I pyridoxal-phosphate-dependent aminotransferase family. Alanine aminotransferase subfamily. As to quaternary structure, homodimer. It depends on pyridoxal 5'-phosphate as a cofactor. In terms of tissue distribution, liver, kidney, heart, and skeletal muscles. Expressed at moderate levels in the adipose tissue.

It is found in the cytoplasm. The enzyme catalyses L-alanine + 2-oxoglutarate = pyruvate + L-glutamate. It functions in the pathway amino-acid degradation; L-alanine degradation via transaminase pathway; pyruvate from L-alanine: step 1/1. Catalyzes the reversible transamination between alanine and 2-oxoglutarate to form pyruvate and glutamate. Participates in cellular nitrogen metabolism and also in liver gluconeogenesis starting with precursors transported from skeletal muscles. The chain is Alanine aminotransferase 1 (GPT) from Homo sapiens (Human).